We begin with the raw amino-acid sequence, 327 residues long: Acetaldehyde dehydrogenase 5 (327 aa).

Residue 15-18 (SGNI) coordinates NAD(+). Cysteine 133 (acyl-thioester intermediate) is an active-site residue. Residues 164–172 (SAGPGTRAN) and asparagine 297 each bind NAD(+).

This sequence belongs to the acetaldehyde dehydrogenase family.

It carries out the reaction acetaldehyde + NAD(+) + CoA = acetyl-CoA + NADH + H(+). The sequence is that of Acetaldehyde dehydrogenase 5 from Rhodococcus jostii (strain RHA1).